The chain runs to 263 residues: Proteasome subunit beta type-5 (263 aa).

Residues 1–59 (MALASVLERPLPVNQRGFFGLGGRADLLDLGPGSLSDGLSLAAPGWGVPEEPGIEMLHG) constitute a propeptide, removed in mature form. The active-site Nucleophile is the threonine 60. A bortezomib-binding site is contributed by alanine 108.

The protein belongs to the peptidase T1B family. The 26S proteasome consists of a 20S proteasome core and two 19S regulatory subunits. The 20S proteasome core is a barrel-shaped complex made of 28 subunits that are arranged in four stacked rings. The two outer rings are each formed by seven alpha subunits, and the two inner rings are formed by seven beta subunits. The proteolytic activity is exerted by three beta-subunits PSMB5, PSMB6 and PSMB7. Directly interacts with POMP. Interacts with ABCB1 and TAP1. In terms of assembly, (Microbial infection) Interacts with HIV-1 TAT protein.

It localises to the cytoplasm. The protein localises to the nucleus. It catalyses the reaction Cleavage of peptide bonds with very broad specificity.. In terms of biological role, component of the 20S core proteasome complex involved in the proteolytic degradation of most intracellular proteins. This complex plays numerous essential roles within the cell by associating with different regulatory particles. Associated with two 19S regulatory particles, forms the 26S proteasome and thus participates in the ATP-dependent degradation of ubiquitinated proteins. The 26S proteasome plays a key role in the maintenance of protein homeostasis by removing misfolded or damaged proteins that could impair cellular functions, and by removing proteins whose functions are no longer required. Associated with the PA200 or PA28, the 20S proteasome mediates ubiquitin-independent protein degradation. This type of proteolysis is required in several pathways including spermatogenesis (20S-PA200 complex) or generation of a subset of MHC class I-presented antigenic peptides (20S-PA28 complex). Within the 20S core complex, PSMB5 displays a chymotrypsin-like activity. This chain is Proteasome subunit beta type-5, found in Homo sapiens (Human).